We begin with the raw amino-acid sequence, 184 residues long: UPF0316 protein YebE (184 aa).

3 consecutive transmembrane segments (helical) span residues 9-29, 41-61, and 67-87; these read GIAM…FFTI, LAAG…SLVL, and IQNV…GMKI.

The protein belongs to the UPF0316 family.

The protein resides in the cell membrane. This Bacillus subtilis (strain 168) protein is UPF0316 protein YebE (yebE).